A 236-amino-acid chain; its full sequence is Glucosamine-6-phosphate deaminase (236 aa).

Residue aspartate 62 is the Proton acceptor; for enolization step of the active site. Catalysis depends on asparagine 128, which acts as the For ring-opening step. Histidine 130 (proton acceptor; for ring-opening step) is an active-site residue. The active-site For ring-opening step is the glutamate 135.

It belongs to the glucosamine/galactosamine-6-phosphate isomerase family. NagB subfamily.

It carries out the reaction alpha-D-glucosamine 6-phosphate + H2O = beta-D-fructose 6-phosphate + NH4(+). Its pathway is amino-sugar metabolism; N-acetylneuraminate degradation; D-fructose 6-phosphate from N-acetylneuraminate: step 5/5. In terms of biological role, catalyzes the reversible isomerization-deamination of glucosamine 6-phosphate (GlcN6P) to form fructose 6-phosphate (Fru6P) and ammonium ion. The chain is Glucosamine-6-phosphate deaminase from Oenococcus oeni (strain ATCC BAA-331 / PSU-1).